Here is a 582-residue protein sequence, read N- to C-terminus: Probable DNA ligase (582 aa).

E248 is an ATP binding site. K250 serves as the catalytic N6-AMP-lysine intermediate. Residues R255, R270, E299, F339, R416, and K422 each coordinate ATP.

This sequence belongs to the ATP-dependent DNA ligase family. Requires Mg(2+) as cofactor.

It carries out the reaction ATP + (deoxyribonucleotide)n-3'-hydroxyl + 5'-phospho-(deoxyribonucleotide)m = (deoxyribonucleotide)n+m + AMP + diphosphate.. Its function is as follows. DNA ligase that seals nicks in double-stranded DNA during DNA replication, DNA recombination and DNA repair. This is Probable DNA ligase from Persephonella marina (strain DSM 14350 / EX-H1).